The following is a 449-amino-acid chain: Tubulin alpha-B chain (449 aa).

GTP contacts are provided by glutamine 11, glutamate 71, serine 140, glycine 144, threonine 145, threonine 179, asparagine 206, and asparagine 228. Glutamate 71 lines the Mg(2+) pocket. Glutamate 254 is an active-site residue.

The protein belongs to the tubulin family. As to quaternary structure, dimer of alpha and beta chains. A typical microtubule is a hollow water-filled tube with an outer diameter of 25 nm and an inner diameter of 15 nM. Alpha-beta heterodimers associate head-to-tail to form protofilaments running lengthwise along the microtubule wall with the beta-tubulin subunit facing the microtubule plus end conferring a structural polarity. Microtubules usually have 13 protofilaments but different protofilament numbers can be found in some organisms and specialized cells. Mg(2+) is required as a cofactor.

It is found in the cytoplasm. The protein resides in the cytoskeleton. The enzyme catalyses GTP + H2O = GDP + phosphate + H(+). In terms of biological role, tubulin is the major constituent of microtubules, a cylinder consisting of laterally associated linear protofilaments composed of alpha- and beta-tubulin heterodimers. Microtubules grow by the addition of GTP-tubulin dimers to the microtubule end, where a stabilizing cap forms. Below the cap, tubulin dimers are in GDP-bound state, owing to GTPase activity of alpha-tubulin. This Neurospora crassa (strain ATCC 24698 / 74-OR23-1A / CBS 708.71 / DSM 1257 / FGSC 987) protein is Tubulin alpha-B chain (tba-2).